Here is a 238-residue protein sequence, read N- to C-terminus: tRNA (guanine-N(1)-)-methyltransferase (238 aa).

132 to 137 (IGDYVL) lines the S-adenosyl-L-methionine pocket.

This sequence belongs to the RNA methyltransferase TrmD family. In terms of assembly, homodimer.

The protein localises to the cytoplasm. It catalyses the reaction guanosine(37) in tRNA + S-adenosyl-L-methionine = N(1)-methylguanosine(37) in tRNA + S-adenosyl-L-homocysteine + H(+). Specifically methylates guanosine-37 in various tRNAs. The protein is tRNA (guanine-N(1)-)-methyltransferase of Nitrobacter hamburgensis (strain DSM 10229 / NCIMB 13809 / X14).